The primary structure comprises 93 residues: Small ribosomal subunit protein bS18 (93 aa).

The protein belongs to the bacterial ribosomal protein bS18 family. As to quaternary structure, part of the 30S ribosomal subunit. Forms a tight heterodimer with protein bS6.

Functionally, binds as a heterodimer with protein bS6 to the central domain of the 16S rRNA, where it helps stabilize the platform of the 30S subunit. This Paracidovorax citrulli (strain AAC00-1) (Acidovorax citrulli) protein is Small ribosomal subunit protein bS18.